The primary structure comprises 486 residues: Cardiolipin synthase A (486 aa).

The next 2 membrane-spanning stretches (helical) occupy residues 3 to 23 (IFYDLIKWLVVLIYWLLIANI) and 38 to 58 (MSWLLTIYIIPFIGIAIWFFF). 2 PLD phosphodiesterase domains span residues 219-246 (LDVRQHRKIILIDNYISYSGSMNLVDPY) and 399-426 (KKGLLHSKSILIDQQLSLIGTVNLDMRS). Active-site residues include histidine 224, lysine 226, aspartate 231, histidine 404, lysine 406, and aspartate 411.

The protein belongs to the phospholipase D family. Cardiolipin synthase subfamily. ClsA sub-subfamily.

The protein resides in the cell inner membrane. It catalyses the reaction 2 a 1,2-diacyl-sn-glycero-3-phospho-(1'-sn-glycerol) = a cardiolipin + glycerol. Functionally, catalyzes the reversible phosphatidyl group transfer from one phosphatidylglycerol molecule to another to form cardiolipin (CL) (diphosphatidylglycerol) and glycerol. The chain is Cardiolipin synthase A from Buchnera aphidicola subsp. Schizaphis graminum (strain Sg).